The sequence spans 328 residues: Nucleotide-binding protein BLD_0430 (328 aa).

The interval 1 to 35 (MNQQTTNRDTGEAAATNAPANSATSTSTPDNQPTP) is disordered. A compositionally biased stretch (low complexity) spans 13 to 29 (AAATNAPANSATSTSTP). 46–53 (GMSGAGRS) contributes to the ATP binding site. 101–104 (DVRS) is a GTP binding site.

This sequence belongs to the RapZ-like family.

In terms of biological role, displays ATPase and GTPase activities. This is Nucleotide-binding protein BLD_0430 from Bifidobacterium longum (strain DJO10A).